The sequence spans 298 residues: 4-hydroxy-tetrahydrodipicolinate synthase (298 aa).

Threonine 48 provides a ligand contact to pyruvate. Tyrosine 137 serves as the catalytic Proton donor/acceptor. Residue lysine 166 is the Schiff-base intermediate with substrate of the active site. Residue isoleucine 207 participates in pyruvate binding.

The protein belongs to the DapA family. As to quaternary structure, homotetramer; dimer of dimers.

The protein localises to the cytoplasm. The catalysed reaction is L-aspartate 4-semialdehyde + pyruvate = (2S,4S)-4-hydroxy-2,3,4,5-tetrahydrodipicolinate + H2O + H(+). It participates in amino-acid biosynthesis; L-lysine biosynthesis via DAP pathway; (S)-tetrahydrodipicolinate from L-aspartate: step 3/4. Functionally, catalyzes the condensation of (S)-aspartate-beta-semialdehyde [(S)-ASA] and pyruvate to 4-hydroxy-tetrahydrodipicolinate (HTPA). The protein is 4-hydroxy-tetrahydrodipicolinate synthase of Campylobacter jejuni subsp. jejuni serotype O:23/36 (strain 81-176).